The primary structure comprises 327 residues: Phenylalanine--tRNA ligase alpha subunit (327 aa).

Position 252 (Glu252) interacts with Mg(2+).

Belongs to the class-II aminoacyl-tRNA synthetase family. Phe-tRNA synthetase alpha subunit type 1 subfamily. As to quaternary structure, tetramer of two alpha and two beta subunits. Requires Mg(2+) as cofactor.

It localises to the cytoplasm. The enzyme catalyses tRNA(Phe) + L-phenylalanine + ATP = L-phenylalanyl-tRNA(Phe) + AMP + diphosphate + H(+). The polypeptide is Phenylalanine--tRNA ligase alpha subunit (Pectobacterium carotovorum subsp. carotovorum (strain PC1)).